A 166-amino-acid polypeptide reads, in one-letter code: MYSMQLASCVTLTLVLLVNSAPTSSPTSSSTSSSTAEAQQQQQHLEQLLMDLQELLSRMENYRNLKLPRMLTFKFYLPKQATELKDLQCLEDELGPLQSVLDLTQSKSFQLEDAENFISNIRVTVVKLKGSDNTIECQFDDESATVVDFLRRWIAFCQSIISTSPQ.

Residues 1–20 form the signal peptide; the sequence is MYSMQLASCVTLTLVLLVNS. A glycan (O-linked (GalNAc...) threonine) is linked at Thr23. A disulfide bridge links Cys89 with Cys137.

It belongs to the IL-2 family.

It localises to the secreted. Its function is as follows. Cytokine produced by activated CD4-positive helper T-cells and to a lesser extend activated CD8-positive T-cells and natural killer (NK) cells that plays pivotal roles in the immune response and tolerance. Binds to a receptor complex composed of either the high-affinity trimeric IL-2R (IL2RA/CD25, IL2RB/CD122 and IL2RG/CD132) or the low-affinity dimeric IL-2R (IL2RB and IL2RG). Interaction with the receptor leads to oligomerization and conformation changes in the IL-2R subunits resulting in downstream signaling starting with phosphorylation of JAK1 and JAK3. In turn, JAK1 and JAK3 phosphorylate the receptor to form a docking site leading to the phosphorylation of several substrates including STAT5. This process leads to activation of several pathways including STAT, phosphoinositide-3-kinase/PI3K and mitogen-activated protein kinase/MAPK pathways. Functions as a T-cell growth factor and can increase NK-cell cytolytic activity as well. Promotes strong proliferation of activated B-cells and subsequently immunoglobulin production. Plays a pivotal role in regulating the adaptive immune system by controlling the survival and proliferation of regulatory T-cells, which are required for the maintenance of immune tolerance. Moreover, participates in the differentiation and homeostasis of effector T-cell subsets, including Th1, Th2, Th17 as well as memory CD8-positive T-cells. The protein is Interleukin-2 (Il2) of Mus spretus (Western Mediterranean mouse).